Consider the following 136-residue polypeptide: uncharacterized protein (136 aa).

This is an uncharacterized protein from Ictaluridae (bullhead catfishes).